The chain runs to 2556 residues: Non-reducing polyketide synthase tazA (2556 aa).

The segment at Leu-16–His-270 is N-terminal acylcarrier protein transacylase domain (SAT). The active-site Nucleophile; for transacylase activity is the Cys-143. His-270 acts as the Proton donor/acceptor; for transacylase activity in catalysis. The 373-residue stretch at Glu-397 to Gln-769 folds into the Ketosynthase family 3 (KS3) domain. Residues Cys-876–Ala-1209 form a malonyl-CoA:ACP transacylase (MAT) domain region. Positions Tyr-1254 to Glu-1383 are N-terminal hotdog fold. The PKS/mFAS DH domain occupies Tyr-1254–Ser-1560. The tract at residues Val-1257–Thr-1564 is product template (PT) domain. The active-site Proton acceptor; for dehydratase activity is the His-1285. The tract at residues Asp-1408 to Ser-1560 is C-terminal hotdog fold. Asp-1465 serves as the catalytic Proton donor; for dehydratase activity. The tract at residues Thr-1567–Lys-1621 is disordered. A compositionally biased stretch (polar residues) spans Asp-1577–Glu-1593. Positions Ser-1620–Leu-1694 constitute a Carrier domain. Ser-1654 carries the O-(pantetheine 4'-phosphoryl)serine modification. The interval Ser-1700–Asp-1731 is disordered. The span at Ala-1702–Asp-1731 shows a compositional bias: polar residues. The segment at Leu-1830 to Asn-2107 is methyltransferase domain. The NADPH-binding (R) domain stretch occupies residues Val-2180 to Thr-2424.

The cofactor is pantetheine 4'-phosphate.

The protein operates within secondary metabolite biosynthesis. Functionally, non-reducing polyketide synthase; part of the gene cluster that mediates the biosynthesis of azaterrilone A and other azaphilones, a class of fungal metabolites characterized by a highly oxygenated pyrano-quinone bicyclic core and exhibiting a broad range of bioactivities. The first step of the pathway begins with tazA that assembles one acetyl-CoA starter unit, five malonyl-CoA units, and catalyzes a series of Claisen condensations, methylation, PT-mediated cyclization, and finally releases the first hexaketide precursor through the R-domain. The tazA product then undergoes reduction on its terminal ketone and the following pyran-ring formation by yet undetermined enzyme(s). Dehydration and enoyl reduction, possibly involving the trans-enoyl reductase tazE leads to the next intermediate. TazD is predicted as an acetyltransferase and might catalyze the acetylation steps leading to the synthesis of azaterrilone A. Azaterrilone A is not the final product of the taz pathway and both the highly reducing polyketide synthase tazB and the dual enzyme tazHJ catalyze late steps of the pathway, leading to the production of the 2 final stereoisomers that contain additional polyketide modification whose structures have still to be determined. This chain is Non-reducing polyketide synthase tazA, found in Aspergillus terreus (strain NIH 2624 / FGSC A1156).